Reading from the N-terminus, the 319-residue chain is Acetyl-coenzyme A carboxylase carboxyl transferase subunit alpha (319 aa).

The CoA carboxyltransferase C-terminal domain occupies 34 to 295 (ELEEEVSKLK…KVRLKRDLAD (262 aa)).

It belongs to the AccA family. In terms of assembly, acetyl-CoA carboxylase is a heterohexamer composed of biotin carboxyl carrier protein (AccB), biotin carboxylase (AccC) and two subunits each of ACCase subunit alpha (AccA) and ACCase subunit beta (AccD).

It is found in the cytoplasm. It carries out the reaction N(6)-carboxybiotinyl-L-lysyl-[protein] + acetyl-CoA = N(6)-biotinyl-L-lysyl-[protein] + malonyl-CoA. Its pathway is lipid metabolism; malonyl-CoA biosynthesis; malonyl-CoA from acetyl-CoA: step 1/1. In terms of biological role, component of the acetyl coenzyme A carboxylase (ACC) complex. First, biotin carboxylase catalyzes the carboxylation of biotin on its carrier protein (BCCP) and then the CO(2) group is transferred by the carboxyltransferase to acetyl-CoA to form malonyl-CoA. The chain is Acetyl-coenzyme A carboxylase carboxyl transferase subunit alpha from Pseudoalteromonas translucida (strain TAC 125).